The primary structure comprises 528 residues: Ivanolysin (528 aa).

The N-terminal stretch at 1 to 23 (MKKIMLLLMTLLLVSLPLAQEAQ) is a signal peptide. A run of 4 beta stranded transmembrane segments spans residues 213–226 (ESQLVAKFGAAFKA), 233–242 (VNFGAISEGK), 311–320 (STRVKAAFDT), and 328–340 (KGDTELENIIQNA). The Conserved undecapeptide motif lies at 482–492 (ECTGLAWEWWR). Residues 514-515 (TL) carry the Cholesterol binding motif.

The protein belongs to the cholesterol-dependent cytolysin family. As to quaternary structure, homooligomeric pore complex of 35 to 50 subunits; when inserted in the host membrane.

The protein localises to the secreted. Its subcellular location is the host membrane. A cholesterol-dependent toxin that causes cytolysis by forming pores in cholesterol containing host membranes. After binding to target membranes, the protein undergoes a major conformation change, leading to its insertion in the host membrane and formation of an oligomeric pore complex. Cholesterol is required for binding to host membranes, membrane insertion and pore formation; cholesterol binding is mediated by a Thr-Leu pair in the C-terminus. Can be reversibly inactivated by oxidation. The sequence is that of Ivanolysin (ilo) from Listeria ivanovii.